We begin with the raw amino-acid sequence, 214 residues long: Mexicain (214 aa).

3 cysteine pairs are disulfide-bonded: Cys-22–Cys-63, Cys-56–Cys-95, and Cys-153–Cys-200. Cys-25 is an active-site residue. Residue Cys-25 participates in E64 binding. Residues His-159 and Asn-175 contribute to the active site.

Belongs to the peptidase C1 family. In terms of tissue distribution, expressed in latex.

It localises to the secreted. In terms of biological role, cysteine protease. The sequence is that of Mexicain from Jacaratia mexicana (Wild papaya).